A 43-amino-acid chain; its full sequence is Potassium channel toxin gamma-KTx 4.3 (43 aa).

Intrachain disulfides connect Cys-5–Cys-23, Cys-11–Cys-34, Cys-20–Cys-39, and Cys-24–Cys-41.

Belongs to the ergtoxin family. Gamma-KTx 4 subfamily. Expressed by the venom gland.

Its subcellular location is the secreted. Its function is as follows. Reversibly blocks Kv11/ERG potassium channels. This chain is Potassium channel toxin gamma-KTx 4.3, found in Centruroides exilicauda (Bark scorpion).